We begin with the raw amino-acid sequence, 316 residues long: Protoheme IX farnesyltransferase (316 aa).

9 helical membrane-spanning segments follow: residues 32-52 (VMSLVVFTAFAGLVLAPGHIN), 53-73 (PVLGLIAILCIAVGAGASGAL), 93-113 (IPAGRIAPSEALAFGLVLSGF), 116-136 (VILGLAVNWLSAAILAFTIFF), 152-172 (NIVIGGAAGAFPPMIGWACVT), 180-200 (TVLFLIIFLWTPAHFWALALF), 221-241 (VTKHQIVAYAVLTAICAVLPS), 252-271 (LVAAALGAIFVYCSIAVWRM), and 289-309 (IFYLFAVFSALMIDRLAAILV).

Belongs to the UbiA prenyltransferase family. Protoheme IX farnesyltransferase subfamily.

The protein resides in the cell inner membrane. The catalysed reaction is heme b + (2E,6E)-farnesyl diphosphate + H2O = Fe(II)-heme o + diphosphate. Its pathway is porphyrin-containing compound metabolism; heme O biosynthesis; heme O from protoheme: step 1/1. Functionally, converts heme B (protoheme IX) to heme O by substitution of the vinyl group on carbon 2 of heme B porphyrin ring with a hydroxyethyl farnesyl side group. This chain is Protoheme IX farnesyltransferase, found in Rhizobium etli (strain ATCC 51251 / DSM 11541 / JCM 21823 / NBRC 15573 / CFN 42).